A 285-amino-acid polypeptide reads, in one-letter code: Acetyl-coenzyme A carboxylase carboxyl transferase subunit beta (285 aa).

Residues 24–285 (GLWYKSPTGK…DLIQNQPVRA (262 aa)) form the CoA carboxyltransferase N-terminal domain.

This sequence belongs to the AccD/PCCB family. Acetyl-CoA carboxylase is a heterohexamer composed of biotin carboxyl carrier protein (AccB), biotin carboxylase (AccC) and two subunits each of ACCase subunit alpha (AccA) and ACCase subunit beta (AccD).

It localises to the cytoplasm. The enzyme catalyses N(6)-carboxybiotinyl-L-lysyl-[protein] + acetyl-CoA = N(6)-biotinyl-L-lysyl-[protein] + malonyl-CoA. The protein operates within lipid metabolism; malonyl-CoA biosynthesis; malonyl-CoA from acetyl-CoA: step 1/1. Component of the acetyl coenzyme A carboxylase (ACC) complex. Biotin carboxylase (BC) catalyzes the carboxylation of biotin on its carrier protein (BCCP) and then the CO(2) group is transferred by the transcarboxylase to acetyl-CoA to form malonyl-CoA. This Christiangramia forsetii (strain DSM 17595 / CGMCC 1.15422 / KT0803) (Gramella forsetii) protein is Acetyl-coenzyme A carboxylase carboxyl transferase subunit beta.